The chain runs to 714 residues: Polyribonucleotide nucleotidyltransferase (714 aa).

The Mg(2+) site is built by D489 and D495. The region spanning 556 to 615 is the KH domain; it reads PKIDTIKIDVDKIKVVIGKGGETIDKIIAETGVKIDIDEEGNVSIYSSDQDAINRAKEII. In terms of domain architecture, S1 motif spans 625 to 693; sequence GEVYHAKVVR…DKGRIDASMK (69 aa). Residues 691–714 are disordered; the sequence is SMKALVPRPPKPEKSEAKKEGKHD. Residues 700-714 show a composition bias toward basic and acidic residues; sequence PKPEKSEAKKEGKHD.

The protein belongs to the polyribonucleotide nucleotidyltransferase family. The cofactor is Mg(2+).

It localises to the cytoplasm. The catalysed reaction is RNA(n+1) + phosphate = RNA(n) + a ribonucleoside 5'-diphosphate. In terms of biological role, involved in mRNA degradation. Catalyzes the phosphorolysis of single-stranded polyribonucleotides processively in the 3'- to 5'-direction. The polypeptide is Polyribonucleotide nucleotidyltransferase (Streptococcus equi subsp. equi (strain 4047)).